The primary structure comprises 144 residues: Universal stress protein A homolog 1 (144 aa).

The protein belongs to the universal stress protein A family. In terms of assembly, homodimer.

The protein resides in the cytoplasm. Involved in stress response. This is Universal stress protein A homolog 1 (uspA1) from Coxiella burnetii (strain RSA 493 / Nine Mile phase I).